Here is a 119-residue protein sequence, read N- to C-terminus: Small ribosomal subunit protein eS25 (119 aa).

The segment at 1 to 42 is disordered; it reads MPPKKDTKASAKQPQKTQKKKEGSGGGKAKKKKWSKGKVRDK. Positions 28-37 are enriched in basic residues; the sequence is KAKKKKWSKG.

The protein belongs to the eukaryotic ribosomal protein eS25 family.

The polypeptide is Small ribosomal subunit protein eS25 (RpS25) (Spodoptera frugiperda (Fall armyworm)).